Consider the following 451-residue polypeptide: LisH domain-containing protein C1711.05 (451 aa).

The region spanning 6-38 (MKSKVCPLIYHFLQENGYVKTAQTFLKETGDKD) is the LisH domain. Residues 59–394 (PYLTTEDVGK…VGDPSQWDFA (336 aa)) are disordered. Residues 73 to 98 (KESLEKSNDDSQKISKKGAPPEKAHS) are compositionally biased toward basic and acidic residues. Residues 99–120 (SSEASGSGSSSDESDSSSSESE) show a composition bias toward low complexity. The span at 135–145 (SESESSSEDSD) shows a compositional bias: acidic residues. The span at 146 to 174 (SSSSSSDSESESSSEGSDSSSSSSSSESE) shows a compositional bias: low complexity. Over residues 189–199 (SESESSSEDSD) the composition is skewed to acidic residues. Positions 200 to 228 (SSSSSSDSESESSSEGSDSSSSSSSSESE) are enriched in low complexity. Acidic residues-rich tracts occupy residues 243–253 (SESESSSEDSD) and 278–300 (DSEDDSSSDSSDSESESSSEDSD). A compositionally biased stretch (low complexity) spans 301–319 (STSSSSDSDSSSSSEDGNS). Residues 320 to 332 (NTDTTTSGEVSAQ) are compositionally biased toward polar residues. The segment covering 333 to 343 (SSTNSTSSEES) has biased composition (low complexity). Basic and acidic residues predominate over residues 344-365 (TSVKDEDSSKIHDKSLKRKHED). Residues 369 to 380 (STSTKSSRTTKT) are compositionally biased toward low complexity.

It localises to the nucleus. The protein resides in the nucleolus. This Schizosaccharomyces pombe (strain 972 / ATCC 24843) (Fission yeast) protein is LisH domain-containing protein C1711.05.